A 316-amino-acid chain; its full sequence is tRNA dimethylallyltransferase (316 aa).

17–24 (GPTASGKT) provides a ligand contact to ATP. Position 19-24 (19-24 (TASGKT)) interacts with substrate. Interaction with substrate tRNA regions lie at residues 42–45 (DSAL), 166–170 (QRLSR), 247–252 (RCVGYR), and 280–287 (KRQITWLR).

Belongs to the IPP transferase family. Monomer. Requires Mg(2+) as cofactor.

The enzyme catalyses adenosine(37) in tRNA + dimethylallyl diphosphate = N(6)-dimethylallyladenosine(37) in tRNA + diphosphate. Functionally, catalyzes the transfer of a dimethylallyl group onto the adenine at position 37 in tRNAs that read codons beginning with uridine, leading to the formation of N6-(dimethylallyl)adenosine (i(6)A). In Escherichia coli O127:H6 (strain E2348/69 / EPEC), this protein is tRNA dimethylallyltransferase.